The following is an 89-amino-acid chain: Small ribosomal subunit protein uS17 (89 aa).

Belongs to the universal ribosomal protein uS17 family. In terms of assembly, part of the 30S ribosomal subunit.

Functionally, one of the primary rRNA binding proteins, it binds specifically to the 5'-end of 16S ribosomal RNA. The sequence is that of Small ribosomal subunit protein uS17 from Xanthomonas axonopodis pv. citri (strain 306).